The following is a 103-amino-acid chain: Co-chaperonin GroES (103 aa).

The protein belongs to the GroES chaperonin family. Heptamer of 7 subunits arranged in a ring. Interacts with the chaperonin GroEL.

Its subcellular location is the cytoplasm. Together with the chaperonin GroEL, plays an essential role in assisting protein folding. The GroEL-GroES system forms a nano-cage that allows encapsulation of the non-native substrate proteins and provides a physical environment optimized to promote and accelerate protein folding. GroES binds to the apical surface of the GroEL ring, thereby capping the opening of the GroEL channel. In Picosynechococcus sp. (strain ATCC 27264 / PCC 7002 / PR-6) (Agmenellum quadruplicatum), this protein is Co-chaperonin GroES.